The sequence spans 346 residues: D-erythrose-4-phosphate dehydrogenase (346 aa).

11 to 12 (RI) is an NAD(+) binding site. Substrate is bound by residues 163-165 (SCT), Arg209, 222-223 (TK), and Arg245. Cys164 acts as the Nucleophile in catalysis. Asn327 contributes to the NAD(+) binding site.

This sequence belongs to the glyceraldehyde-3-phosphate dehydrogenase family. Epd subfamily. In terms of assembly, homotetramer.

The protein resides in the cytoplasm. The enzyme catalyses D-erythrose 4-phosphate + NAD(+) + H2O = 4-phospho-D-erythronate + NADH + 2 H(+). It functions in the pathway cofactor biosynthesis; pyridoxine 5'-phosphate biosynthesis; pyridoxine 5'-phosphate from D-erythrose 4-phosphate: step 1/5. Its function is as follows. Catalyzes the NAD-dependent conversion of D-erythrose 4-phosphate to 4-phosphoerythronate. This is D-erythrose-4-phosphate dehydrogenase from Vibrio vulnificus (strain CMCP6).